The primary structure comprises 800 residues: Ent-copalyl diphosphate synthase 2, chloroplastic (800 aa).

The transit peptide at 1 to 47 (MQMQVLTAASSLPRATLLRPAAAEPWRQSFLQLQARPIQRPGIMLHC) directs the protein to the chloroplast. Positions 52 to 80 (QGQETRERRQLDDDEHARPPQGGDDDVAA) are disordered. Over residues 55–69 (ETRERRQLDDDEHAR) the composition is skewed to basic and acidic residues. Position 242 (K242) interacts with substrate. Residues D374 and D376 each coordinate Mg(2+). Residues 374 to 377 (DIDD) carry the DXDD motif motif. Residue K461 participates in substrate binding.

This sequence belongs to the terpene synthase family. Mg(2+) serves as cofactor.

Its subcellular location is the plastid. It is found in the chloroplast. The catalysed reaction is (2E,6E,10E)-geranylgeranyl diphosphate = ent-copalyl diphosphate. It participates in secondary metabolite biosynthesis; terpenoid biosynthesis. In terms of biological role, catalyzes the conversion of geranylgeranyl diphosphate to the phytoalexin precursor ent-copalyl diphosphate. In Oryza sativa subsp. japonica (Rice), this protein is Ent-copalyl diphosphate synthase 2, chloroplastic.